The primary structure comprises 111 residues: Small ribosomal subunit protein uS15c (111 aa).

It belongs to the universal ribosomal protein uS15 family. As to quaternary structure, part of the 30S ribosomal subunit.

Its subcellular location is the plastid. It localises to the chloroplast. This Staurastrum punctulatum (Green alga) protein is Small ribosomal subunit protein uS15c (rps15).